We begin with the raw amino-acid sequence, 182 residues long: NADH-quinone oxidoreductase subunit B 2 (182 aa).

4 residues coordinate [4Fe-4S] cluster: Cys-47, Cys-48, Cys-113, and Cys-142.

It belongs to the complex I 20 kDa subunit family. As to quaternary structure, NDH-1 is composed of 14 different subunits. Subunits NuoB, C, D, E, F, and G constitute the peripheral sector of the complex. Requires [4Fe-4S] cluster as cofactor.

The protein localises to the cell inner membrane. The enzyme catalyses a quinone + NADH + 5 H(+)(in) = a quinol + NAD(+) + 4 H(+)(out). In terms of biological role, NDH-1 shuttles electrons from NADH, via FMN and iron-sulfur (Fe-S) centers, to quinones in the respiratory chain. The immediate electron acceptor for the enzyme in this species is believed to be ubiquinone. Couples the redox reaction to proton translocation (for every two electrons transferred, four hydrogen ions are translocated across the cytoplasmic membrane), and thus conserves the redox energy in a proton gradient. This Anaeromyxobacter sp. (strain K) protein is NADH-quinone oxidoreductase subunit B 2.